Consider the following 219-residue polypeptide: Proteasome subunit beta (219 aa).

A propeptide spans 1–14 (removed in mature form; by autocatalysis); the sequence is MISNSEYHKEYMKG. Thr15 (nucleophile) is an active-site residue.

It belongs to the peptidase T1B family. As to quaternary structure, the 20S proteasome core is composed of 14 alpha and 14 beta subunits that assemble into four stacked heptameric rings, resulting in a barrel-shaped structure. The two inner rings, each composed of seven catalytic beta subunits, are sandwiched by two outer rings, each composed of seven alpha subunits. The catalytic chamber with the active sites is on the inside of the barrel. Has a gated structure, the ends of the cylinder being occluded by the N-termini of the alpha-subunits. Is capped at one or both ends by the proteasome regulatory ATPase, PAN.

Its subcellular location is the cytoplasm. It carries out the reaction Cleavage of peptide bonds with very broad specificity.. The formation of the proteasomal ATPase PAN-20S proteasome complex, via the docking of the C-termini of PAN into the intersubunit pockets in the alpha-rings, triggers opening of the gate for substrate entry. Interconversion between the open-gate and close-gate conformations leads to a dynamic regulation of the 20S proteasome proteolysis activity. In terms of biological role, component of the proteasome core, a large protease complex with broad specificity involved in protein degradation. This Methanococcus maripaludis (strain C6 / ATCC BAA-1332) protein is Proteasome subunit beta.